We begin with the raw amino-acid sequence, 1216 residues long: Coatomer subunit alpha-1 (1216 aa).

8 WD repeats span residues 7–48, 49–88, 91–132, 133–172, 202–241, 246–285, 288–326, and 363–404; these read TKSN…DRFD, EHEGPVRGVHFHNSQPLFVSGGDDYKIKVWNYKNHRCLFT, GHLD…SVLT, GHNHYVMCASFHPKEDLVVSASLDQTVRVWDIGALRKKTV, GHDRGVNWAAFHPTLPLIVSGADDRQVKLWRMNETKAWEV, GHMNNVSSVMFHAKQDIIVSNSEDKSIRVWDATKRTGLQT, REHDRFWILAVHPEMNLLAAGHDSGMIVFKLERERPAFA, and SLNQ…VGRS.

As to quaternary structure, oligomeric complex that consists of at least the alpha, beta, beta', gamma, delta, epsilon and zeta subunits.

The protein resides in the cytoplasm. Its subcellular location is the golgi apparatus membrane. It is found in the cytoplasmic vesicle. The protein localises to the COPI-coated vesicle membrane. Functionally, the coatomer is a cytosolic protein complex that binds to dilysine motifs and reversibly associates with Golgi non-clathrin-coated vesicles, which further mediate biosynthetic protein transport from the ER, via the Golgi up to the trans Golgi network. Coatomer complex is required for budding from Golgi membranes, and is essential for the retrograde Golgi-to-ER transport of dilysine-tagged proteins. The protein is Coatomer subunit alpha-1 of Arabidopsis thaliana (Mouse-ear cress).